Here is a 906-residue protein sequence, read N- to C-terminus: Inactive angiotensin-converting enzyme-related protein (906 aa).

Residues Met1 to Thr19 form the signal peptide. A disordered region spans residues Leu28–Ile95. Positions Pro67–Pro83 are enriched in basic and acidic residues. A glycan (N-linked (GlcNAc...) asparagine) is linked at Asn159. The Peptidase M2 domain occupies Ile175–Asp765. A disulfide bridge connects residues Cys289 and Cys297. A glycan (N-linked (GlcNAc...) asparagine) is linked at Asn653. Positions Val862–Pro882 are disordered. Residues Thr863–Pro882 are compositionally biased toward low complexity.

It belongs to the peptidase M2 family. Expressed in the hypodermis, in the vulva during organogenesis, and in the ray papillae of the male tail.

Inactive as a metallopeptidase, due to a lack of active site residues. Required for larval molting, male tail development, and formation of adult alae. Acts in the heterochronic pathway and plays a role in the developmental timing of postembryonic hypodermal seam cell division and adult alae production. Acts synergistically with apl-1 in let-7 regulated postembryonic cell division events. Might act downstream of the heterochronic protein lin-41. Negative regulator of lifespan, heat and oxidative stress response and age-related degenerative changes like reduced pharyngeal pumping and decreased body movements. Lifespan restriction is dependent on the forkhead-type transcription factor daf-16. In Caenorhabditis elegans, this protein is Inactive angiotensin-converting enzyme-related protein.